An 85-amino-acid polypeptide reads, in one-letter code: Depressant scorpion toxin BmKIM (85 aa).

Positions 1–21 are cleaved as a signal peptide; that stretch reads MKLFLLLVFFASMLIDGLVNA. Residues 22–82 enclose the LCN-type CS-alpha/beta domain; it reads DGYIRGSNGC…TWKSESNTCG (61 aa). 4 disulfide bridges follow: Cys-31/Cys-81, Cys-35/Cys-56, Cys-42/Cys-63, and Cys-46/Cys-65. Gly-82 carries the post-translational modification Glycine amide.

It belongs to the long (4 C-C) scorpion toxin superfamily. Sodium channel inhibitor family. In terms of tissue distribution, expressed by the venom gland.

The protein localises to the secreted. In terms of biological role, causes a slow progressive depressant flaccid paralysis, when injected into S.falculata blowfly larvae. Inhibits dose-dependently the total sodium (Nav) currents both in dorsal root ganglia neurons and in ventricular myocytes. Is toxic to mice by intravenous injection, but not by subcutaneous or intracerebroventricular injection. Produces antiarrhythmia in rat. Is then active on both mammals and insects. This chain is Depressant scorpion toxin BmKIM (KIM2), found in Olivierus martensii (Manchurian scorpion).